A 139-amino-acid chain; its full sequence is Acidic phospholipase A2 H1E6 (139 aa).

The signal sequence occupies residues 1–16; that stretch reads MRTLWILAVLQVGVEG. 7 disulfides stabilise this stretch: C42-C132, C44-C60, C59-C111, C65-C139, C66-C104, C73-C97, and C91-C102. Ca(2+) contacts are provided by Y43, G45, and G47. Residue H63 is part of the active site. D64 contributes to the Ca(2+) binding site. Residue D105 is part of the active site.

In terms of assembly, homodimer. The cofactor is Ca(2+). As to expression, expressed by the venom gland.

It is found in the secreted. It carries out the reaction a 1,2-diacyl-sn-glycero-3-phosphocholine + H2O = a 1-acyl-sn-glycero-3-phosphocholine + a fatty acid + H(+). Its function is as follows. Snake venom phospholipase A2 (PLA2) that inhibits ADP-induced platelet aggregation. PLA2 catalyzes the calcium-dependent hydrolysis of the 2-acyl groups in 3-sn-phosphoglycerides. In Calloselasma rhodostoma (Malayan pit viper), this protein is Acidic phospholipase A2 H1E6.